We begin with the raw amino-acid sequence, 184 residues long: Orotate phosphoribosyltransferase (184 aa).

5-phospho-alpha-D-ribose 1-diphosphate-binding positions include Arg-99, Lys-100, Lys-103, His-105, and 125–133 (EDTTTTGNS). The orotate site is built by Thr-129 and Arg-157.

It belongs to the purine/pyrimidine phosphoribosyltransferase family. PyrE subfamily. In terms of assembly, homodimer. Requires Mg(2+) as cofactor.

The catalysed reaction is orotidine 5'-phosphate + diphosphate = orotate + 5-phospho-alpha-D-ribose 1-diphosphate. It participates in pyrimidine metabolism; UMP biosynthesis via de novo pathway; UMP from orotate: step 1/2. In terms of biological role, catalyzes the transfer of a ribosyl phosphate group from 5-phosphoribose 1-diphosphate to orotate, leading to the formation of orotidine monophosphate (OMP). The chain is Orotate phosphoribosyltransferase from Corynebacterium glutamicum (strain ATCC 13032 / DSM 20300 / JCM 1318 / BCRC 11384 / CCUG 27702 / LMG 3730 / NBRC 12168 / NCIMB 10025 / NRRL B-2784 / 534).